The sequence spans 337 residues: DNA-directed RNA polymerase subunit alpha (337 aa).

The tract at residues 1–233 (MIQKNWQELI…DQLSVFVNFK (233 aa)) is alpha N-terminal domain (alpha-NTD). The alpha C-terminal domain (alpha-CTD) stretch occupies residues 249-337 (FNPALLKKVD…DLAKHYEDQY (89 aa)).

This sequence belongs to the RNA polymerase alpha chain family. In terms of assembly, homodimer. The RNAP catalytic core consists of 2 alpha, 1 beta, 1 beta' and 1 omega subunit. When a sigma factor is associated with the core the holoenzyme is formed, which can initiate transcription.

The catalysed reaction is RNA(n) + a ribonucleoside 5'-triphosphate = RNA(n+1) + diphosphate. Functionally, DNA-dependent RNA polymerase catalyzes the transcription of DNA into RNA using the four ribonucleoside triphosphates as substrates. The polypeptide is DNA-directed RNA polymerase subunit alpha (Bartonella bacilliformis (strain ATCC 35685 / KC583 / Herrer 020/F12,63)).